The chain runs to 796 residues: Exocyst complex component 3 (796 aa).

Positions 87-174 (PQLKEKLREL…GTNTEKEQML (88 aa)) form a coiled coil.

It belongs to the SEC6 family. As to quaternary structure, the exocyst complex is composed of sec-3/exoc1, sec-5/exoc2, sec-6/exoc3, sec-8/exoc4, sec-10/exoc5, sec-15/exoc6, exo-70/exoc7 and exo-84/exoc8.

Component of the exocyst complex involved in the docking of exocytic vesicles with fusion sites on the plasma membrane. The sequence is that of Exocyst complex component 3 (sec-6) from Caenorhabditis elegans.